We begin with the raw amino-acid sequence, 226 residues long: Agamous-like MADS-box protein AP3 (226 aa).

The MADS-box domain maps to Met1–Ser61. Residues Tyr84–Asp174 form the K-box domain.

In terms of tissue distribution, expressed during flower development in stamens and petals.

The protein localises to the nucleus. In terms of biological role, probable transcription factor involved in flower development. The protein is Agamous-like MADS-box protein AP3 of Vitis vinifera (Grape).